The chain runs to 1218 residues: NACHT, LRR and PYD domains-containing protein 1a allele 3 (1218 aa).

Residues 1–29 (MGESQSKQESNTRVAQHGSQQDVDPTFQT) are compositionally biased toward polar residues. Disordered stretches follow at residues 1 to 44 (MGES…QVEQ) and 71 to 91 (EMDH…DRSE). Over residues 77 to 87 (RRHSHQSKKKL) the composition is skewed to basic residues. Residues 175-484 (QLVIIEGAAG…EFFAAMSYIL (310 aa)) enclose the NACHT domain. Position 181–188 (181–188 (GAAGIGKS)) interacts with ATP. 3 LRR repeats span residues 343–364 (KERN…LTLC), 673–693 (NLEE…RSLC), and 730–750 (RLAE…RQLC). Positions 799 to 815 (TMPTENTDGEESLTSSK) are enriched in polar residues. The tract at residues 799–842 (TMPTENTDGEESLTSSKQQQQQSGDKHMEPLGTDDDFWGPSGPV) is disordered. The segment at 835–968 (FWGPSGPVST…HFAVLENPSF (134 aa)) is ZU5. The region spanning 835 to 1118 (FWGPSGPVST…LRPALPRMAS (284 aa)) is the FIIND domain. The segment at 969–1118 (SPMGVLLRMI…LRPALPRMAS (150 aa)) is UPA. The 90-residue stretch at 1122–1211 (DAPALLHFVD…HLIMDLLEKS (90 aa)) folds into the CARD domain.

It belongs to the NLRP family. Interacts (via LRR repeats) with BCL2 and BCL2L1 (via the loop between motifs BH4 and BH3). Interacts with NOD2; this interaction is enhanced in the presence of muramyl dipeptide (MDP) and increases IL1B release. Interacts with EIF2AK2/PKR; this interaction requires EIF2AK2 activity, is accompanied by EIF2AK2 autophosphorylation and promotes inflammasome assembly in response to danger-associated signals. Interacts with MEFV; this interaction targets Nlrp1a to degradation by autophagy, hence preventing excessive IL1B- and IL18-mediated inflammation. Interacts with DPP9; leading to inhibit activation of the inflammasome. DPP9 acts via formation of a ternary complex, composed of a DPP9 homodimer, one full-length NLRP1 protein, and one cleaved C-terminus of Nlrp1a (NACHT, LRR and PYD domains-containing protein 1a, C-terminus). Interacts with DPP8; leading to inhibit activation of the inflammasome, probably via formation of a ternary complex with DPP8. As to quaternary structure, interacts with the C-terminal part of Nlrp1a (NACHT, LRR and PYD domains-containing protein 1a, C-terminus) in absence of pathogens and other damage-associated signals. In terms of assembly, interacts with the N-terminal part of Nlrp1a (NACHT, LRR and PYD domains-containing protein 1a, N-terminus) in absence of pathogens and other damage-associated signals. Homomultimer; forms the Nlrp1a inflammasome polymeric complex, a filament composed of homopolymers of this form in response to pathogens and other damage-associated signals. The Nlrp1a inflammasome polymeric complex directly recruits pro-caspase-1 (proCASP1) independently of PYCARD/ASC. Interacts (via CARD domain) with CASP1 (via CARD domain); leading to CASP1 activation. Autocatalytically cleaved. Autocatalytic cleavage in FIIND region occurs constitutively, prior to activation signals, and is required for inflammasome activity (IL1B release), possibly by facilitating CASP1 binding. Both N- and C-terminal parts remain associated non-covalently. In terms of processing, ubiquitinated in response to pathogen-associated signals, leading to its degradation by the proteasome and subsequent release of the cleaved C-terminal part of the protein (NACHT, LRR and PYD domains-containing protein 1a, C-terminus), which polymerizes and forms the Nlrp1a inflammasome.

The protein localises to the cytoplasm. The protein resides in the cytosol. Its subcellular location is the nucleus. It localises to the inflammasome. Its activity is regulated as follows. Activated by pathogens and other damage-associated signals: activation promotes ubiquitination and degradation of the N-terminal part, releasing the cleaved C-terminal part of the protein (NACHT, LRR and PYD domains-containing protein 1a, C-terminus), which polymerizes and forms the Nlrp1a inflammasome. Nlrp1a inflammasome is inhibited by DPP8 and DPP9, which sequester the C-terminal fragment of Nlrp1a (NACHT, LRR and PYD domains-containing protein 1a, C-terminus) in a ternary complex, thereby preventing Nlrp1a oligomerization and activation. Nlrp1a inflammasome is strongly activated by Val-boroPro (Talabostat, PT-100), an inhibitor of dipeptidyl peptidases DPP8 and DPP9. Val-boroPro relieves inhibition of DPP8 and/or DPP9 by promoting disruption of the ternary complex, releasing its C-terminal part from autoinhibition. Not activated by cleavage by B.anthracis lethal toxin (LT) endopeptidase. Functionally, acts as the sensor component of the Nlrp1a inflammasome, which mediates inflammasome activation in response to various pathogen-associated signals, leading to subsequent pyroptosis. Inflammasomes are supramolecular complexes that assemble in the cytosol in response to pathogens and other damage-associated signals and play critical roles in innate immunity and inflammation. Acts as a recognition receptor (PRR): recognizes specific pathogens and other damage-associated signals, such as Val-boroPro inhibitor, and mediates the formation of the inflammasome polymeric complex. In response to pathogen-associated signals, the N-terminal part of Nlrp1a is degraded by the proteasome, releasing the cleaved C-terminal part of the protein (NACHT, LRR and PYD domains-containing protein 1a, C-terminus), which polymerizes to initiate the formation of the inflammasome complex: the inflammasome directly recruits pro-caspase-1 (proCASP1) independently of PYCARD/ASC and promotes caspase-1 (CASP1) activation, which subsequently cleaves and activates inflammatory cytokines IL1B and IL18 and gasdermin-D (GSDMD), leading to pyroptosis. In the absence of GSDMD expression, the Nlrp1a inflammasome is able to recruit and activate CASP8, leading to activation of gasdermin-E (GSDME). Its function is as follows. Constitutes the precursor of the Nlrp1a inflammasome, which mediates autoproteolytic processing within the FIIND domain to generate the N-terminal and C-terminal parts, which are associated non-covalently in absence of pathogens and other damage-associated signals. In terms of biological role, regulatory part that prevents formation of the Nlrp1a inflammasome: in absence of pathogens and other damage-associated signals, interacts with the C-terminal part of Nlrp1a (NACHT, LRR and PYD domains-containing protein 1a, C-terminus), preventing activation of the Nlrp1a inflammasome. In response to pathogen-associated signals, this part is ubiquitinated by the N-end rule pathway and degraded by the proteasome, releasing the cleaved C-terminal part of the protein, which polymerizes and forms the Nlrp1a inflammasome. Constitutes the active part of the Nlrp1a inflammasome. In absence of pathogens and other damage-associated signals, interacts with the N-terminal part of Nlrp1a (NACHT, LRR and PYD domains-containing protein 1a, N-terminus), preventing activation of the Nlrp1a inflammasome. In response to pathogen-associated signals, the N-terminal part of Nlrp1a is degraded by the proteasome, releasing this form, which polymerizes to form the Nlrp1a inflammasome complex: the Nlrp1a inflammasome complex then directly recruits pro-caspase-1 (proCASP1) and promotes caspase-1 (CASP1) activation, leading to gasdermin-D (GSDMD) cleavage and subsequent pyroptosis. The sequence is that of NACHT, LRR and PYD domains-containing protein 1a allele 3 from Rattus norvegicus (Rat).